The following is a 214-amino-acid chain: Galactokinase (214 aa).

Alpha-D-galactose is bound by residues arginine 47, aspartate 53, histidine 54, and aspartate 56. Residues glycine 149, glycine 151, serine 153, and serine 154 each coordinate ATP. Residue aspartate 199 participates in alpha-D-galactose binding. Aspartate 199 (proton acceptor) is an active-site residue.

This sequence belongs to the GHMP kinase family. GalK subfamily.

It carries out the reaction alpha-D-galactose + ATP = alpha-D-galactose 1-phosphate + ADP + H(+). It functions in the pathway carbohydrate metabolism; galactose metabolism. Galactokinase is a key enzyme in the galactose metabolism where it catalyzes the conversion of alpha-D-galactose to galactose 1-phosphate. Can also induce the transcription of the gal genes in response to the organism being challenged with galactose as the sole source of carbon. This is Galactokinase from Candida maltosa (Yeast).